Reading from the N-terminus, the 123-residue chain is Small ribosomal subunit protein uS13 (123 aa).

Residues 97–123 (PVRGQKTKTNARTRKGPKKTVGRKKKK) form a disordered region. Over residues 101 to 123 (QKTKTNARTRKGPKKTVGRKKKK) the composition is skewed to basic residues.

This sequence belongs to the universal ribosomal protein uS13 family. Part of the 30S ribosomal subunit. Forms a loose heterodimer with protein S19. Forms two bridges to the 50S subunit in the 70S ribosome.

Its function is as follows. Located at the top of the head of the 30S subunit, it contacts several helices of the 16S rRNA. In the 70S ribosome it contacts the 23S rRNA (bridge B1a) and protein L5 of the 50S subunit (bridge B1b), connecting the 2 subunits; these bridges are implicated in subunit movement. Contacts the tRNAs in the A and P-sites. The protein is Small ribosomal subunit protein uS13 of Alkaliphilus oremlandii (strain OhILAs) (Clostridium oremlandii (strain OhILAs)).